Here is a 581-residue protein sequence, read N- to C-terminus: Invertase (581 aa).

A signal peptide spans Met1–Ala22. N-linked (GlcNAc...) asparagine glycosylation is found at Asn37, Asn40, Asn46, Asn57, Asn62, and Asn79. Substrate contacts are provided by residues Phe94 to Asp97, Gln113, and Phe158 to Ser159. The active site involves Asp97. Asn168 and Asn175 each carry an N-linked (GlcNAc...) asparagine glycan. Substrate is bound by residues Arg227–Asp228 and Glu280. N-linked (GlcNAc...) asparagine glycosylation occurs at Asn322. Substrate is bound at residue Trp366. N-linked (GlcNAc...) asparagine glycosylation is found at Asn399, Asn409, Asn425, Asn446, Asn452, Asn519, and Asn569.

Belongs to the glycosyl hydrolase 32 family. In terms of processing, glycosylated; contains 67% carbohydrates. This is composed of equimolar amounts of mannose and galactose. There is also a small amount of glucosamine present.

The catalysed reaction is Hydrolysis of terminal non-reducing beta-D-fructofuranoside residues in beta-D-fructofuranosides.. The chain is Invertase (inv1) from Schizosaccharomyces pombe (strain 972 / ATCC 24843) (Fission yeast).